A 76-amino-acid chain; its full sequence is U1-cyrtautoxin-As1d (76 aa).

Disulfide bonds link Cys23-Cys37, Cys30-Cys51, Cys36-Cys66, and Cys69-Cys76.

Belongs to the neurotoxin 21 family. In terms of tissue distribution, expressed by the venom gland.

It is found in the secreted. Functionally, neurotoxin with probable ion channel impairing activity. In vivo, is both paralytic and lethal, when injected into lepidopteran larvae. This chain is U1-cyrtautoxin-As1d, found in Apomastus schlingeri (Trap-door spider).